Reading from the N-terminus, the 199-residue chain is ATP-dependent Clp protease proteolytic subunit 2 (199 aa).

The active-site Nucleophile is Ser98. His123 is a catalytic residue.

This sequence belongs to the peptidase S14 family. In terms of assembly, fourteen ClpP subunits assemble into 2 heptameric rings which stack back to back to give a disk-like structure with a central cavity, resembling the structure of eukaryotic proteasomes.

The protein resides in the cytoplasm. The enzyme catalyses Hydrolysis of proteins to small peptides in the presence of ATP and magnesium. alpha-casein is the usual test substrate. In the absence of ATP, only oligopeptides shorter than five residues are hydrolyzed (such as succinyl-Leu-Tyr-|-NHMec, and Leu-Tyr-Leu-|-Tyr-Trp, in which cleavage of the -Tyr-|-Leu- and -Tyr-|-Trp bonds also occurs).. In terms of biological role, cleaves peptides in various proteins in a process that requires ATP hydrolysis. Has a chymotrypsin-like activity. Plays a major role in the degradation of misfolded proteins. The protein is ATP-dependent Clp protease proteolytic subunit 2 of Corynebacterium diphtheriae (strain ATCC 700971 / NCTC 13129 / Biotype gravis).